The chain runs to 429 residues: Enolase (429 aa).

Q163 serves as a coordination point for (2R)-2-phosphoglycerate. The active-site Proton donor is E205. Positions 242, 287, and 314 each coordinate Mg(2+). 4 residues coordinate (2R)-2-phosphoglycerate: K339, R368, S369, and K390. Residue K339 is the Proton acceptor of the active site.

Belongs to the enolase family. In terms of assembly, homooctamer. Mg(2+) serves as cofactor.

The protein resides in the cytoplasm. The protein localises to the secreted. Its subcellular location is the cell surface. The enzyme catalyses (2R)-2-phosphoglycerate = phosphoenolpyruvate + H2O. The protein operates within carbohydrate degradation; glycolysis; pyruvate from D-glyceraldehyde 3-phosphate: step 4/5. Its function is as follows. Catalyzes the reversible conversion of 2-phosphoglycerate (2-PG) into phosphoenolpyruvate (PEP). It is essential for the degradation of carbohydrates via glycolysis. This chain is Enolase, found in Zymomonas mobilis subsp. mobilis (strain ATCC 31821 / ZM4 / CP4).